Consider the following 340-residue polypeptide: Anthranilate phosphoribosyltransferase (340 aa).

5-phospho-alpha-D-ribose 1-diphosphate-binding positions include glycine 81, 84 to 85 (GD), threonine 89, 91 to 94 (NIST), 109 to 117 (KHGNRNLSS), and alanine 121. Anthranilate is bound at residue glycine 81. Residue serine 93 coordinates Mg(2+). Asparagine 112 is a binding site for anthranilate. Arginine 167 is an anthranilate binding site. Positions 226 and 227 each coordinate Mg(2+).

Belongs to the anthranilate phosphoribosyltransferase family. In terms of assembly, homodimer. The cofactor is Mg(2+).

The enzyme catalyses N-(5-phospho-beta-D-ribosyl)anthranilate + diphosphate = 5-phospho-alpha-D-ribose 1-diphosphate + anthranilate. It participates in amino-acid biosynthesis; L-tryptophan biosynthesis; L-tryptophan from chorismate: step 2/5. In terms of biological role, catalyzes the transfer of the phosphoribosyl group of 5-phosphorylribose-1-pyrophosphate (PRPP) to anthranilate to yield N-(5'-phosphoribosyl)-anthranilate (PRA). The protein is Anthranilate phosphoribosyltransferase of Ruegeria sp. (strain TM1040) (Silicibacter sp.).